The sequence spans 124 residues: Large ribosomal subunit protein eL31 (124 aa).

Belongs to the eukaryotic ribosomal protein eL31 family. As to quaternary structure, component of the large ribosomal subunit.

The protein localises to the cytoplasm. Its function is as follows. Component of the large ribosomal subunit. The ribosome is a large ribonucleoprotein complex responsible for the synthesis of proteins in the cell. This chain is Large ribosomal subunit protein eL31 (rpl31), found in Paralichthys olivaceus (Bastard halibut).